Here is a 210-residue protein sequence, read N- to C-terminus: NADH dehydrogenase [ubiquinone] iron-sulfur protein 8, mitochondrial (210 aa).

The N-terminal 34 residues, 1-34, are a transit peptide targeting the mitochondrion; the sequence is MRCLTTPMLLRALAQAARAGPPGGRSLHSSAVAA. 4Fe-4S ferredoxin-type domains follow at residues 102–131 and 141–170; these read RRYP…IEAE and TRYD…EGPN. Cysteine 111, cysteine 114, cysteine 117, cysteine 121, cysteine 150, cysteine 153, cysteine 156, and cysteine 160 together coordinate [4Fe-4S] cluster.

Belongs to the complex I 23 kDa subunit family. As to quaternary structure, core subunit of respiratory chain NADH dehydrogenase (Complex I) which is composed of 45 different subunits. This is a component of the iron-sulfur (IP) fragment of the enzyme. Interacts with RAB5IF. It depends on [4Fe-4S] cluster as a cofactor. In terms of tissue distribution, expressed in all tissues with the highest level in heart and skeletal muscle and the lowest level in lung.

It localises to the mitochondrion inner membrane. The enzyme catalyses a ubiquinone + NADH + 5 H(+)(in) = a ubiquinol + NAD(+) + 4 H(+)(out). In terms of biological role, core subunit of the mitochondrial membrane respiratory chain NADH dehydrogenase (Complex I) which catalyzes electron transfer from NADH through the respiratory chain, using ubiquinone as an electron acceptor. Essential for the catalytic activity and assembly of complex I. This is NADH dehydrogenase [ubiquinone] iron-sulfur protein 8, mitochondrial (NDUFS8) from Homo sapiens (Human).